The primary structure comprises 861 residues: Bifunctional uridylyltransferase/uridylyl-removing enzyme (861 aa).

The tract at residues Met-1–Arg-321 is uridylyltransferase. The interval Leu-322–Thr-678 is uridylyl-removing. The HD domain occupies Val-440–Leu-562. 2 consecutive ACT domains span residues Glu-679–Arg-760 and Gln-788–Tyr-861.

It belongs to the GlnD family. The cofactor is Mg(2+).

The enzyme catalyses [protein-PII]-L-tyrosine + UTP = [protein-PII]-uridylyl-L-tyrosine + diphosphate. It carries out the reaction [protein-PII]-uridylyl-L-tyrosine + H2O = [protein-PII]-L-tyrosine + UMP + H(+). Its activity is regulated as follows. Uridylyltransferase (UTase) activity is inhibited by glutamine, while glutamine activates uridylyl-removing (UR) activity. Functionally, modifies, by uridylylation and deuridylylation, the PII regulatory proteins (GlnB and homologs), in response to the nitrogen status of the cell that GlnD senses through the glutamine level. Under low glutamine levels, catalyzes the conversion of the PII proteins and UTP to PII-UMP and PPi, while under higher glutamine levels, GlnD hydrolyzes PII-UMP to PII and UMP (deuridylylation). Thus, controls uridylylation state and activity of the PII proteins, and plays an important role in the regulation of nitrogen assimilation and metabolism. This Legionella pneumophila (strain Paris) protein is Bifunctional uridylyltransferase/uridylyl-removing enzyme.